We begin with the raw amino-acid sequence, 247 residues long: tRNA pseudouridine synthase A (247 aa).

Asp53 functions as the Nucleophile in the catalytic mechanism. Tyr111 lines the substrate pocket.

This sequence belongs to the tRNA pseudouridine synthase TruA family. As to quaternary structure, homodimer.

It catalyses the reaction uridine(38/39/40) in tRNA = pseudouridine(38/39/40) in tRNA. Functionally, formation of pseudouridine at positions 38, 39 and 40 in the anticodon stem and loop of transfer RNAs. In Lacticaseibacillus casei (strain BL23) (Lactobacillus casei), this protein is tRNA pseudouridine synthase A.